Consider the following 340-residue polypeptide: GTPase Obg (340 aa).

Residues 1-159 (MKFLDQAKVY…RTLWLRLKLI (159 aa)) enclose the Obg domain. In terms of domain architecture, OBG-type G spans 160-327 (ADAGIIGLPN…LLRAGAHIIE (168 aa)). Residues 166–173 (GLPNAGKS), 191–195 (FTTLY), 212–215 (DIPG), 279–282 (SQID), and 308–310 (SAV) each bind GTP. Residues S173 and T193 each contribute to the Mg(2+) site.

Belongs to the TRAFAC class OBG-HflX-like GTPase superfamily. OBG GTPase family. As to quaternary structure, monomer. The cofactor is Mg(2+).

The protein localises to the cytoplasm. In terms of biological role, an essential GTPase which binds GTP, GDP and possibly (p)ppGpp with moderate affinity, with high nucleotide exchange rates and a fairly low GTP hydrolysis rate. Plays a role in control of the cell cycle, stress response, ribosome biogenesis and in those bacteria that undergo differentiation, in morphogenesis control. The protein is GTPase Obg of Bartonella henselae (strain ATCC 49882 / DSM 28221 / CCUG 30454 / Houston 1) (Rochalimaea henselae).